The chain runs to 67 residues: Small ribosomal subunit protein eS17 (67 aa).

It belongs to the eukaryotic ribosomal protein eS17 family.

In Pyrococcus horikoshii (strain ATCC 700860 / DSM 12428 / JCM 9974 / NBRC 100139 / OT-3), this protein is Small ribosomal subunit protein eS17.